The sequence spans 443 residues: ATP-dependent protease ATPase subunit HslU (443 aa).

ATP is bound by residues isoleucine 18, 60-65 (GVGKTE), aspartate 256, glutamate 321, and arginine 393.

This sequence belongs to the ClpX chaperone family. HslU subfamily. As to quaternary structure, a double ring-shaped homohexamer of HslV is capped on each side by a ring-shaped HslU homohexamer. The assembly of the HslU/HslV complex is dependent on binding of ATP.

It is found in the cytoplasm. Functionally, ATPase subunit of a proteasome-like degradation complex; this subunit has chaperone activity. The binding of ATP and its subsequent hydrolysis by HslU are essential for unfolding of protein substrates subsequently hydrolyzed by HslV. HslU recognizes the N-terminal part of its protein substrates and unfolds these before they are guided to HslV for hydrolysis. This chain is ATP-dependent protease ATPase subunit HslU, found in Enterobacter sp. (strain 638).